The sequence spans 175 residues: Nucleoside-triphosphatase THEP1 (175 aa).

ATP-binding positions include Gly-16–Thr-23 and Val-103–Gly-110.

This sequence belongs to the THEP1 NTPase family.

The enzyme catalyses a ribonucleoside 5'-triphosphate + H2O = a ribonucleoside 5'-diphosphate + phosphate + H(+). Functionally, has nucleotide phosphatase activity towards ATP, GTP, CTP, TTP and UTP. May hydrolyze nucleoside diphosphates with lower efficiency. The polypeptide is Nucleoside-triphosphatase THEP1 (Pyrobaculum calidifontis (strain DSM 21063 / JCM 11548 / VA1)).